The primary structure comprises 185 residues: Peptide deformylase (185 aa).

Residues cysteine 112 and histidine 155 each contribute to the Fe cation site. Glutamate 156 is a catalytic residue. Residue histidine 159 coordinates Fe cation.

This sequence belongs to the polypeptide deformylase family. It depends on Fe(2+) as a cofactor.

The enzyme catalyses N-terminal N-formyl-L-methionyl-[peptide] + H2O = N-terminal L-methionyl-[peptide] + formate. Functionally, removes the formyl group from the N-terminal Met of newly synthesized proteins. Requires at least a dipeptide for an efficient rate of reaction. N-terminal L-methionine is a prerequisite for activity but the enzyme has broad specificity at other positions. This chain is Peptide deformylase, found in Latilactobacillus sakei subsp. sakei (strain 23K) (Lactobacillus sakei subsp. sakei).